The primary structure comprises 43 residues: Omega-agatoxin-Aa3c (43 aa).

3 cysteine pairs are disulfide-bonded: C2/C19, C9/C25, and C27/C38.

Belongs to the neurotoxin 04 (omega-agtx) family. 03 (type II/III omega-agtx) subfamily. Expressed by the venom gland.

It is found in the secreted. Functionally, omega-agatoxins are antagonists of voltage-gated calcium channels (Cav). The polypeptide is Omega-agatoxin-Aa3c (Agelenopsis aperta (North American funnel-web spider)).